The sequence spans 319 residues: Acetyl-coenzyme A carboxylase carboxyl transferase subunit alpha (319 aa).

The region spanning 34-295 is the CoA carboxyltransferase C-terminal domain; the sequence is ELEEEVSKLK…KVRLKRDLAD (262 aa).

It belongs to the AccA family. In terms of assembly, acetyl-CoA carboxylase is a heterohexamer composed of biotin carboxyl carrier protein (AccB), biotin carboxylase (AccC) and two subunits each of ACCase subunit alpha (AccA) and ACCase subunit beta (AccD).

The protein localises to the cytoplasm. The enzyme catalyses N(6)-carboxybiotinyl-L-lysyl-[protein] + acetyl-CoA = N(6)-biotinyl-L-lysyl-[protein] + malonyl-CoA. It functions in the pathway lipid metabolism; malonyl-CoA biosynthesis; malonyl-CoA from acetyl-CoA: step 1/1. Functionally, component of the acetyl coenzyme A carboxylase (ACC) complex. First, biotin carboxylase catalyzes the carboxylation of biotin on its carrier protein (BCCP) and then the CO(2) group is transferred by the carboxyltransferase to acetyl-CoA to form malonyl-CoA. The polypeptide is Acetyl-coenzyme A carboxylase carboxyl transferase subunit alpha (Pseudoalteromonas translucida (strain TAC 125)).